Reading from the N-terminus, the 281-residue chain is MDFFNKFSQGLAESSTPKSSIYYSEEKDPDTKKDEAIEIGLKSQESYYQRQLREQLARDNMMAASRQPIQPLQPTIHITPQPVPTATPAPILLPSSTAPTPKPRQQTNTSSDMSNLFDWLSEDTDAPASSLLPALTPSNAVQDIISKFNKDQKTTTPPSTQPSQTLPTTTCTQQSDGNISCTTPTVTPPQPPIVATVCTPTPTGGTVCTTAQQNPNPGAASQQNLDDMALKDLMSSVEKDMHQLQAETNDLVTNVYDAREYTRRAIDQILQLVKGFERFQK.

Polar residues predominate over residues 1–22; that stretch reads MDFFNKFSQGLAESSTPKSSIY. 3 disordered regions span residues 1–33, 91–112, and 149–192; these read MDFF…DTKK, ILLP…TSSD, and NKDQ…PQPP. Over residues 24–33 the composition is skewed to basic and acidic residues; sequence SEEKDPDTKK. The segment covering 94-112 has biased composition (polar residues); it reads PSSTAPTPKPRQQTNTSSD. Positions 154–175 are enriched in low complexity; sequence TTTPPSTQPSQTLPTTTCTQQS.

This sequence belongs to the orthopoxvirus OPG130 family. As to quaternary structure, interacts with OPG136 and its cleaved form. Its phosphorylation state is regulated by the OPG054 kinase and the OPG106 phosphatase.

It localises to the virion. The protein localises to the host endoplasmic reticulum-Golgi intermediate compartment membrane. Component of the virion core. Participates in virion assembly. In Vaccinia virus (strain Copenhagen) (VACV), this protein is 39kDa core protein OPG130 (OPG130).